The primary structure comprises 314 residues: Three-prime repair exonuclease 1 (314 aa).

Mg(2+) is bound by residues D18 and E20. A substrate-binding site is contributed by 20–21 (EA). A Phosphoserine modification is found at S78. Y129 contacts substrate. Residue S167 is modified to Phosphoserine. H195 (proton donor/acceptor) is an active-site residue. D200 is a Mg(2+) binding site. D200 is a binding site for substrate. The segment at 236–314 (TASARTKPRP…YGLSLATPGE (79 aa)) is necessary for endoplasmic reticulum localization. The tract at residues 240–278 (RTKPRPSAVTTTAHLATTRNTSPSLGESRGTKDLPPVKD) is disordered. Positions 243-314 (PRPSAVTTTA…YGLSLATPGE (72 aa)) are interaction with UBQLN1. The segment covering 247-260 (AVTTTAHLATTRNT) has biased composition (low complexity). S261 is subject to Phosphoserine. The necessary for cytoplasmic retention stretch occupies residues 281–314 (ALSREGLLAPLGLLAILTLAVATLYGLSLATPGE).

This sequence belongs to the exonuclease superfamily. TREX family. In terms of assembly, homodimer. Interacts (via proline-rich region) with TCERG1/CA150 (via the second WW domain). Component of the SET complex, composed of at least ANP32A, APEX1, HMGB2, NME1, SET and TREX1. Within this complex, directly interacts with SET; this interaction does not result in TREX1 inhibition. Also interacts with NME1, but only following translocation to the nucleus. Directly interacts with UBQLN1 (via ubiquitin-like domain); the interaction may control TREX1 subcellular location. Mg(2+) is required as a cofactor. Ubiquitinated, but not targeted to proteasomal degradation. Ubiquitination may be important for interaction with UBQLN1. In terms of tissue distribution, detected in thymus, spleen, liver, brain, heart, small intestine and colon.

Its subcellular location is the nucleus. It is found in the cytoplasm. The protein resides in the cytosol. The protein localises to the endoplasmic reticulum membrane. The enzyme catalyses Exonucleolytic cleavage in the 3'- to 5'-direction to yield nucleoside 5'-phosphates.. Major cellular 3'-to-5' DNA exonuclease which digests single-stranded DNA (ssDNA) and double-stranded DNA (dsDNA) with mismatched 3' termini. Prevents cell-intrinsic initiation of autoimmunity. Acts by metabolizing DNA fragments from endogenous retroelements, including L1, LTR and SINE elements. Plays a key role in degradation of DNA fragments at cytosolic micronuclei arising from genome instability: its association with the endoplasmic reticulum membrane directs TREX1 to ruptured micronuclei, leading to micronuclear DNA degradation. Micronuclear DNA degradation is required to limit CGAS activation and subsequent inflammation. Unless degraded, these DNA fragments accumulate in the cytosol and activate the cGAS-STING innate immune signaling, leading to the production of type I interferon. Prevents chronic ATM-dependent checkpoint activation, by processing ssDNA polynucleotide species arising from the processing of aberrant DNA replication intermediates. Inefficiently degrades oxidized DNA, such as that generated upon antimicrobial reactive oxygen production or upon absorption of UV light. During GZMA-mediated cell death, contributes to DNA damage in concert with NME1. NME1 nicks one strand of DNA and TREX1 removes bases from the free 3' end to enhance DNA damage and prevent DNA end reannealing and rapid repair. The polypeptide is Three-prime repair exonuclease 1 (Homo sapiens (Human)).